A 219-amino-acid polypeptide reads, in one-letter code: Interleukin-12 subunit alpha (219 aa).

The signal sequence occupies residues 1–22; the sequence is MCPARSLLLVATLVLLDYLSLA. Residues N24, N93, and N107 are each glycosylated (N-linked (GlcNAc...) asparagine). Intrachain disulfides connect C37–C110, C64–C196, and C85–C123.

The protein belongs to the IL-6 superfamily. As to quaternary structure, heterodimer with IL12B; disulfide-linked. This heterodimer is known as interleukin IL-12. Heterodimer with EBI3/IL27B; not disulfide-linked. This heterodimer is known as interleukin IL-35. Interacts with NBR1; this interaction promotes IL-12 secretion.

The protein localises to the secreted. Functionally, heterodimerizes with IL12B to form the IL-12 cytokine or with EBI3/IL27B to form the IL-35 cytokine. IL-12 is primarily produced by professional antigen-presenting cells (APCs) such as B-cells and dendritic cells (DCs) as well as macrophages and granulocytes and regulates T-cell and natural killer-cell responses, induces the production of interferon-gamma (IFN-gamma), favors the differentiation of T-helper 1 (Th1) cells and is an important link between innate resistance and adaptive immunity. Mechanistically, exerts its biological effects through a receptor composed of IL12R1 and IL12R2 subunits. Binding to the receptor results in the rapid tyrosine phosphorylation of a number of cellular substrates including the JAK family kinases TYK2 and JAK2. In turn, recruited STAT4 gets phosphorylated and translocates to the nucleus where it regulates cytokine/growth factor responsive genes. As part of IL-35, plays essential roles in maintaining the immune homeostasis of the liver microenvironment and also functions as an immune-suppressive cytokine. Mediates biological events through unconventional receptors composed of IL12RB2 and gp130/IL6ST heterodimers or homodimers. Signaling requires the transcription factors STAT1 and STAT4, which form a unique heterodimer that binds to distinct DNA sites. The polypeptide is Interleukin-12 subunit alpha (IL12A) (Macaca mulatta (Rhesus macaque)).